A 155-amino-acid chain; its full sequence is uncharacterized protein (155 aa).

The region spanning I4–F65 is the HTH asnC-type domain. A DNA-binding region (H-T-H motif) is located at residues L23–E42.

This is an uncharacterized protein from Pyrococcus horikoshii (strain ATCC 700860 / DSM 12428 / JCM 9974 / NBRC 100139 / OT-3).